A 387-amino-acid chain; its full sequence is 3-hydroxy-D-aspartate aldolase (387 aa).

At Lys-62 the chain carries N6-(pyridoxal phosphate)lysine. Pyridoxal 5'-phosphate is bound by residues Gln-85, Thr-238, 256-257 (GS), and Tyr-265. Positions 355 and 357 each coordinate Mg(2+).

Belongs to the DSD1 family. As to quaternary structure, homodimer. Pyridoxal 5'-phosphate serves as cofactor. It depends on Mg(2+) as a cofactor.

It carries out the reaction (3S)-3-hydroxy-D-aspartate = glyoxylate + glycine. The catalysed reaction is (3R)-3-hydroxy-D-aspartate = glyoxylate + glycine. Functionally, catalyzes the condensation of glyoxylate and glycine into (2R,3S)-beta-hydroxyaspartate ((3S)-3-hydroxy-D-aspartate). Is essential for the growth of P.denitrificans in the presence of glycolate and glyoxylate since it functions in glyoxylate assimilation via the beta-hydroxyaspartate cycle (BHAC). Is also able to catalyze the reverse reaction in vitro, i.e. the cleavage of (3S)-3-hydroxy-D-aspartate, and that of D-threonine to a lesser extent. The protein is 3-hydroxy-D-aspartate aldolase of Paracoccus denitrificans (strain Pd 1222).